Here is a 205-residue protein sequence, read N- to C-terminus: Large ribosomal subunit protein uL4 (205 aa).

Polar residues predominate over residues 43–60; it reads ARSGNRAQQTRAEVSAST. Residues 43-96 form a disordered region; sequence ARSGNRAQQTRAEVSASTHKPWRQKGTGRARSGRASSPIWRGGGVTFPNKPNEN. Basic residues predominate over residues 62-74; sequence KPWRQKGTGRARS.

It belongs to the universal ribosomal protein uL4 family. Part of the 50S ribosomal subunit.

One of the primary rRNA binding proteins, this protein initially binds near the 5'-end of the 23S rRNA. It is important during the early stages of 50S assembly. It makes multiple contacts with different domains of the 23S rRNA in the assembled 50S subunit and ribosome. Its function is as follows. Forms part of the polypeptide exit tunnel. This chain is Large ribosomal subunit protein uL4, found in Thiobacillus denitrificans (strain ATCC 25259 / T1).